The primary structure comprises 213 residues: 24 kDa ookinete surface protein (213 aa).

The first 28 residues, 1 to 28, serve as a signal peptide directing secretion; the sequence is MNFKYSFIFLFFIQLAIRYNNAKITVDT. The EGF-like 1; truncated domain maps to 30-59; it reads CKGGKLIQMSNHYECKCPSGYALKTENTCE. EGF-like domains follow at residues 60-108 and 108-148; these read PIVK…NICK and KPTR…GKCT. Cystine bridges form between Cys64–Cys80, Cys74–Cys94, Cys96–Cys107, Cys112–Cys122, Cys117–Cys134, and Cys136–Cys147. Positions 151–175 constitute an EGF-like 4; truncated domain; it reads GETKCLLKCKAAEECKLTGKHYECV. Asn190 carries GPI-anchor amidated asparagine lipidation. The N-linked (GlcNAc...) asparagine glycan is linked to Asn190. Positions 191–213 are cleaved as a propeptide — removed in mature form; the sequence is SSFMNGMSIISIIALLVIYVIVM.

The protein resides in the cell membrane. This chain is 24 kDa ookinete surface protein, found in Plasmodium berghei (strain Anka).